A 278-amino-acid polypeptide reads, in one-letter code: uncharacterized protein (278 aa).

10 helical membrane-spanning segments follow: residues 1-21 (MLEI…GIAY), 30-50 (AFTA…PLAL), 56-76 (VVID…SFYI), 92-112 (IALP…TVIY), 116-136 (LSLN…IIYG), 146-166 (LFYA…LDFL), 170-190 (LPVS…LSFT), 209-229 (GIFL…SSSW), 230-250 (NVVQ…AIFL), and 258-278 (LVAG…PPLQ). 2 EamA domains span residues 12-136 (ICWA…IIYG) and 154-274 (FSWA…LLLL).

The protein belongs to the EamA transporter family.

The protein resides in the cell membrane. This is an uncharacterized protein from Archaeoglobus fulgidus (strain ATCC 49558 / DSM 4304 / JCM 9628 / NBRC 100126 / VC-16).